Here is a 303-residue protein sequence, read N- to C-terminus: Vesicle-trafficking protein SEC22c (303 aa).

At 1–183 (MSLILFACVV…EPAPSFRMEP (183 aa)) the chain is on the cytoplasmic side. Positions 8–119 (CVVRVRDGLP…YAFLEFDNVI (112 aa)) constitute a Longin domain. The helical transmembrane segment at 184-204 (VTALGILSLILNIMCAALNLI) threads the bilayer. The Lumenal segment spans residues 205–223 (RGIHLAEHSLQVAHEEIGN). The chain crosses the membrane as a helical span at residues 224–244 (ILAFLIPFVACIFQCYLYLFY). Residues 245 to 248 (SPAR) are Cytoplasmic-facing. A helical membrane pass occupies residues 249 to 269 (TMKVVLMLLFICLGNVYLHGL). A topological domain (lumenal) is located at residue R270. The helical transmembrane segment at 271–291 (NLWQILFHIGVAFLSSHQILT) threads the bilayer. At 292 to 303 (RQLQDKQSDCGV) the chain is on the cytoplasmic side.

This sequence belongs to the synaptobrevin family.

The protein localises to the endoplasmic reticulum membrane. In terms of biological role, may be involved in vesicle transport between the ER and the Golgi complex. The polypeptide is Vesicle-trafficking protein SEC22c (SEC22C) (Bos taurus (Bovine)).